The following is a 1112-amino-acid chain: Plasma membrane calcium-transporting ATPase 2 (1112 aa).

Topologically, residues 1 to 94 (MGDMSNSDFY…NLIPPKKPKT (94 aa)) are cytoplasmic. The chain crosses the membrane as a helical span at residues 95 to 115 (FLQLVWEALQDVTLIILEIAA). Residues 116–152 (LISLGLSFYHPPGETGGESCGAAAGGVEDEGEADAGW) lie on the Extracellular side of the membrane. A helical transmembrane segment spans residues 153–173 (IEGAAILLSVVCVVLVTAFND). The Cytoplasmic portion of the chain corresponds to 174–373 (WSKEKQFRGL…KEKSVLQGKL (200 aa)). Basic and acidic residues predominate over residues 298 to 311 (EKKEKKGGAVEDGH). The tract at residues 298-363 (EKKEKKGGAV…KERKKVSAPK (66 aa)) is disordered. A compositionally biased stretch (polar residues) spans 312–327 (QNTGKMQDGNMESNQI). A compositionally biased stretch (basic and acidic residues) spans 351–363 (ADEKERKKVSAPK). The chain crosses the membrane as a helical span at residues 374-393 (TKLAVQIGKAGLLMSAITVI). The Extracellular portion of the chain corresponds to 394–426 (ILVLYFAIDNFVMQKRPWMPECTPIYIQYFVKF). The helical transmembrane segment at 427-444 (FIIGVTVLVVAVPEGLPL) threads the bilayer. The Cytoplasmic segment spans residues 445–858 (AVTISLAYSV…MWGRNVYDSI (414 aa)). Aspartate 482 serves as the catalytic 4-aspartylphosphate intermediate. Mg(2+) contacts are provided by aspartate 803 and aspartate 807. A helical transmembrane segment spans residues 859–878 (SKFLQFQLTVNVVAVIVAFT). Residues 879-888 (GACITQDSPL) are Extracellular-facing. Residues 889 to 909 (KAVQMLWVNLIMDTFASLALA) traverse the membrane as a helical segment. Over 910–929 (TEPPTESLLKRKPYGRNKPL) the chain is Cytoplasmic. The helical transmembrane segment at 930 to 952 (ISSTMTKNILGHGVYQLIIIFTL) threads the bilayer. At 953–970 (LFVGEQIFDIDSGRNAPL) the chain is on the extracellular side. The chain crosses the membrane as a helical span at residues 971–992 (HSPPSEHYTIIFNTFVMMQLFN). Topologically, residues 993 to 1011 (EINARKIHGERNVFDGIFR) are cytoplasmic. Residues 1012 to 1033 (NPIFCSIVFGTFAVQIVIVQFG) form a helical membrane-spanning segment. Topologically, residues 1034-1043 (GKPFSCQPLD) are extracellular. Residues 1044–1065 (LEKWMWCVFLGLGELVWGQVIA) form a helical membrane-spanning segment. Residues 1066-1112 (TIPNSRLRFLRRAGQLTQKDELPEEDVNEENEEIDHAERELRRGQIL) lie on the Cytoplasmic side of the membrane. The interval 1086 to 1112 (ELPEEDVNEENEEIDHAERELRRGQIL) is disordered. Over residues 1087-1098 (LPEEDVNEENEE) the composition is skewed to acidic residues. Basic and acidic residues predominate over residues 1099–1112 (IDHAERELRRGQIL). The interval 1106 to 1112 (LRRGQIL) is calmodulin-binding subdomain A.

This sequence belongs to the cation transport ATPase (P-type) (TC 3.A.3) family. Type IIB subfamily.

It localises to the cell membrane. The enzyme catalyses Ca(2+)(in) + ATP + H2O = Ca(2+)(out) + ADP + phosphate + H(+). In terms of biological role, this magnesium-dependent enzyme catalyzes the hydrolysis of ATP coupled with the transport of calcium out of the cell. This chain is Plasma membrane calcium-transporting ATPase 2 (atp2b2), found in Oreochromis mossambicus (Mozambique tilapia).